Consider the following 686-residue polypeptide: Methionine--tRNA ligase (686 aa).

Residues 13–23 (PYANGQIHIGH) carry the 'HIGH' region motif. Cys144, Cys147, Cys157, and Cys160 together coordinate Zn(2+). The 'KMSKS' region motif lies at 335–339 (KMSKS). Residue Lys338 coordinates ATP. One can recognise a tRNA-binding domain in the interval 580-686 (DFAKVDLRVA…EGAVPGMRIG (107 aa)).

This sequence belongs to the class-I aminoacyl-tRNA synthetase family. MetG type 1 subfamily. In terms of assembly, homodimer. Zn(2+) is required as a cofactor.

The protein localises to the cytoplasm. It carries out the reaction tRNA(Met) + L-methionine + ATP = L-methionyl-tRNA(Met) + AMP + diphosphate. In terms of biological role, is required not only for elongation of protein synthesis but also for the initiation of all mRNA translation through initiator tRNA(fMet) aminoacylation. The sequence is that of Methionine--tRNA ligase from Cupriavidus necator (strain ATCC 17699 / DSM 428 / KCTC 22496 / NCIMB 10442 / H16 / Stanier 337) (Ralstonia eutropha).